A 266-amino-acid chain; its full sequence is Large ribosomal subunit protein uL2c (266 aa).

The segment at 1-24 (MAIHLYKTSTPSTRNGTVDSQVKS) is disordered. A compositionally biased stretch (polar residues) spans 7-24 (KTSTPSTRNGTVDSQVKS).

This sequence belongs to the universal ribosomal protein uL2 family. Part of the 50S ribosomal subunit.

Its subcellular location is the plastid. The protein localises to the chloroplast. In Nicotiana debneyi (Debney's tobacco), this protein is Large ribosomal subunit protein uL2c (rpl2).